An 822-amino-acid chain; its full sequence is Microcephalin (822 aa).

A BRCT 1 domain is found at 10–99 (AFLKDVVAYV…ALVDESLFPA (90 aa)). 3 disordered regions span residues 182-203 (MKEK…SQQN), 219-243 (PLSS…DQER), and 266-295 (SSFY…ESIN). 2 stretches are compositionally biased toward polar residues: residues 189–203 (LSPT…SQQN) and 219–235 (PLSS…SSFG). A phosphoserine mark is found at Ser-273, Ser-290, and Ser-327. Residue Thr-329 is modified to Phosphothreonine. Disordered stretches follow at residues 335–366 (EHQV…LKKR), 498–567 (NDSP…SPED), and 594–636 (TGYS…PTRT). Residues 522 to 541 (HPDTLSSSAHHITPLKGNST) show a composition bias toward polar residues. Composition is skewed to basic and acidic residues over residues 542 to 553 (ETRDPGDGKGSP) and 625 to 634 (KKSEKEEKPT). BRCT domains follow at residues 627–717 (SEKE…PFEL) and 738–820 (YQGT…NYQL).

Interacts with CDC27 and maybe other components of the APC/C complex. Interacts with histone variant H2AX under DNA damage conditions. High levels of expression are found in the developing forebrain and, in particular, in the walls of the lateral ventricles.

Its subcellular location is the cytoplasm. It localises to the cytoskeleton. It is found in the microtubule organizing center. The protein resides in the centrosome. Its function is as follows. Implicated in chromosome condensation and DNA damage induced cellular responses. May play a role in neurogenesis and regulation of the size of the cerebral cortex. This Mus musculus (Mouse) protein is Microcephalin.